The chain runs to 61 residues: Photosystem II assembly protein Psb34 (61 aa).

Residues 36-56 traverse the membrane as a helical segment; it reads LIMAAITVVLVAGLIAVAVVA.

It belongs to the Psb34 family. Part of the photosystem II (PSII) assembly intermediate RC47 complex (with D1, D2, CP47, PsbE, PsbF, PsbH, Psb27 and Psb28); minor amounts are found in other PSII complexes, including mature, dimeric PSII with PsbO and PsbV. No HliA or HliB are detected in any of these complexes. Its interaction with PSII requires both CP47 (psbB) and PsbH. HliA/HliB and Psb34 probably bind to a similar site on CP47; their binding seems to be mutually exclusive.

Its subcellular location is the cellular thylakoid membrane. Functionally, involved in photosystem II (PSII) assembly and/or repair. Probably involved in conversion of late PSII assembly intermediates into mature dimeric PSII, it may mediate the optimal equlibrium of HliA/HliB among the intermediates containing CP47 (psbB) to facilitate photoprotection during assembly. This Synechocystis sp. (strain ATCC 27184 / PCC 6803 / Kazusa) protein is Photosystem II assembly protein Psb34.